A 336-amino-acid polypeptide reads, in one-letter code: Atypical chemokine receptor 1 (336 aa).

The Extracellular portion of the chain corresponds to 1–63 (MGNCLHTAEL…CNLLDDSALP (63 aa)). Residues Asn-16, Asn-27, and Asn-33 are each glycosylated (N-linked (GlcNAc...) asparagine). Intrachain disulfides connect Cys-51–Cys-276 and Cys-129–Cys-195. The chain crosses the membrane as a helical span at residues 64-84 (FFILTSVLGILASSTVLFILF). Residues 85-95 (RPLFRWQLCPG) lie on the Cytoplasmic side of the membrane. The helical transmembrane segment at 96-116 (WPVLAQLAVGSALFSIVVPIL) threads the bilayer. Residues 117–129 (APGLGSTHSSALC) lie on the Extracellular side of the membrane. Residues 130 to 153 (SLGYCVWYGSAFAQALLLGCHASL) traverse the membrane as a helical segment. Residues 154–166 (GHRLGAGQVPGLT) are Cytoplasmic-facing. A helical transmembrane segment spans residues 167–187 (LGLTVGIWGVAALLTLPVTLA). Over 188-207 (SGASGGLCTPIHSTELKALQ) the chain is Extracellular. A helical membrane pass occupies residues 208-228 (ATHTVACLAIFVLLPLGLFGA). Residues 229 to 244 (KGLKKALGMGPGPWMN) are Cytoplasmic-facing. A helical membrane pass occupies residues 245 to 265 (ILWAWFIFWWPHGVVLGLDFL). Residues 266-287 (VRSKLLLLSTCLAQQALDLLLN) lie on the Extracellular side of the membrane. Residues 288–308 (LAEALAILHCVATPLILALFY) form a helical membrane-spanning segment. Residues 309 to 336 (HQATRTLLPSLPLPEGWSSHLDTLGSKS) lie on the Cytoplasmic side of the membrane.

This sequence belongs to the G-protein coupled receptor 1 family. Atypical chemokine receptor subfamily.

It localises to the early endosome. It is found in the recycling endosome. Its subcellular location is the membrane. Its function is as follows. Atypical chemokine receptor that controls chemokine levels and localization via high-affinity chemokine binding that is uncoupled from classic ligand-driven signal transduction cascades, resulting instead in chemokine sequestration, degradation, or transcytosis. Also known as interceptor (internalizing receptor) or chemokine-scavenging receptor or chemokine decoy receptor. Has a promiscuous chemokine-binding profile, interacting with inflammatory chemokines of both the CXC and the CC subfamilies but not with homeostatic chemokines. Acts as a receptor for chemokines including CCL2, CCL5, CCL7, CCL11, CCL13, CCL14, CCL17, CXCL5, CXCL6, IL8/CXCL8, CXCL11, GRO, RANTES, MCP-1 and TARC. May regulate chemokine bioavailability and, consequently, leukocyte recruitment through two distinct mechanisms: when expressed in endothelial cells, it sustains the abluminal to luminal transcytosis of tissue-derived chemokines and their subsequent presentation to circulating leukocytes; when expressed in erythrocytes, serves as blood reservoir of cognate chemokines but also as a chemokine sink, buffering potential surges in plasma chemokine levels. The protein is Atypical chemokine receptor 1 (ACKR1) of Gorilla gorilla gorilla (Western lowland gorilla).